Consider the following 320-residue polypeptide: Transaldolase (320 aa).

Lys126 serves as the catalytic Schiff-base intermediate with substrate.

This sequence belongs to the transaldolase family. Type 1 subfamily. In terms of assembly, homodimer.

Its subcellular location is the cytoplasm. It catalyses the reaction D-sedoheptulose 7-phosphate + D-glyceraldehyde 3-phosphate = D-erythrose 4-phosphate + beta-D-fructose 6-phosphate. It participates in carbohydrate degradation; pentose phosphate pathway; D-glyceraldehyde 3-phosphate and beta-D-fructose 6-phosphate from D-ribose 5-phosphate and D-xylulose 5-phosphate (non-oxidative stage): step 2/3. Functionally, transaldolase is important for the balance of metabolites in the pentose-phosphate pathway. This Bordetella bronchiseptica (strain ATCC BAA-588 / NCTC 13252 / RB50) (Alcaligenes bronchisepticus) protein is Transaldolase.